Reading from the N-terminus, the 336-residue chain is tRNA N6-adenosine threonylcarbamoyltransferase (336 aa).

Fe cation contacts are provided by histidine 111, histidine 115, and tyrosine 132. Substrate contacts are provided by residues 132-136, aspartate 164, aspartate 185, and serine 264; that span reads YLSGG. Fe cation is bound at residue aspartate 292.

Belongs to the KAE1 / TsaD family. The cofactor is Fe(2+).

The protein resides in the cytoplasm. The enzyme catalyses L-threonylcarbamoyladenylate + adenosine(37) in tRNA = N(6)-L-threonylcarbamoyladenosine(37) in tRNA + AMP + H(+). In terms of biological role, required for the formation of a threonylcarbamoyl group on adenosine at position 37 (t(6)A37) in tRNAs that read codons beginning with adenine. Is probably involved in the transfer of the threonylcarbamoyl moiety of threonylcarbamoyl-AMP (TC-AMP) to the N6 group of A37. The chain is tRNA N6-adenosine threonylcarbamoyltransferase from Sulfurisphaera tokodaii (strain DSM 16993 / JCM 10545 / NBRC 100140 / 7) (Sulfolobus tokodaii).